A 221-amino-acid polypeptide reads, in one-letter code: GTP cyclohydrolase III (221 aa).

Belongs to the archaeal-type GTP cyclohydrolase family.

It carries out the reaction GTP + 3 H2O = 2-amino-5-formylamino-6-(5-phospho-D-ribosylamino)pyrimidin-4(3H)-one + 2 phosphate + 2 H(+). Its function is as follows. Catalyzes the formation of 2-amino-5-formylamino-6-ribofuranosylamino-4(3H)-pyrimidinone ribonucleotide monophosphate and inorganic phosphate from GTP. Also has an independent pyrophosphate phosphohydrolase activity. This is GTP cyclohydrolase III from Pyrobaculum calidifontis (strain DSM 21063 / JCM 11548 / VA1).